The sequence spans 96 residues: Glutamyl-tRNA(Gln) amidotransferase subunit C (96 aa).

It belongs to the GatC family. Heterotrimer of A, B and C subunits.

The enzyme catalyses L-glutamyl-tRNA(Gln) + L-glutamine + ATP + H2O = L-glutaminyl-tRNA(Gln) + L-glutamate + ADP + phosphate + H(+). The catalysed reaction is L-aspartyl-tRNA(Asn) + L-glutamine + ATP + H2O = L-asparaginyl-tRNA(Asn) + L-glutamate + ADP + phosphate + 2 H(+). Functionally, allows the formation of correctly charged Asn-tRNA(Asn) or Gln-tRNA(Gln) through the transamidation of misacylated Asp-tRNA(Asn) or Glu-tRNA(Gln) in organisms which lack either or both of asparaginyl-tRNA or glutaminyl-tRNA synthetases. The reaction takes place in the presence of glutamine and ATP through an activated phospho-Asp-tRNA(Asn) or phospho-Glu-tRNA(Gln). This chain is Glutamyl-tRNA(Gln) amidotransferase subunit C, found in Neisseria meningitidis serogroup A / serotype 4A (strain DSM 15465 / Z2491).